Here is a 107-residue protein sequence, read N- to C-terminus: uncharacterized protein (107 aa).

Residues 1–20 (MYIKGRLIFFFVVLVIALCS) form the signal peptide.

This is an uncharacterized protein from Listeria monocytogenes serovar 1/2a (strain ATCC BAA-679 / EGD-e).